We begin with the raw amino-acid sequence, 637 residues long: tRNA uridine 5-carboxymethylaminomethyl modification enzyme MnmG (637 aa).

FAD is bound at residue 18–23 (GAGHAG). 281–295 (GPRYCPSIEDKIVRF) contacts NAD(+).

It belongs to the MnmG family. Homodimer. Heterotetramer of two MnmE and two MnmG subunits. FAD serves as cofactor.

It is found in the cytoplasm. Its function is as follows. NAD-binding protein involved in the addition of a carboxymethylaminomethyl (cmnm) group at the wobble position (U34) of certain tRNAs, forming tRNA-cmnm(5)s(2)U34. This is tRNA uridine 5-carboxymethylaminomethyl modification enzyme MnmG from Ligilactobacillus salivarius (strain UCC118) (Lactobacillus salivarius).